Consider the following 487-residue polypeptide: DNA-dependent metalloprotease SPRTN (487 aa).

At Met-1 the chain carries N-acetylmethionine. The region spanning 45–212 is the SprT-like domain; sequence LQGLFVLFND…KTCGGTYIKI (168 aa). Zn(2+) is bound at residue His-111. Residue Glu-112 is part of the active site. Zn(2+)-binding residues include His-115 and His-130. Positions 219–248 are disordered; it reads SKKGKGKTKLRKQPVSEAENKDKPNRGEKQ. Residues 220 to 230 show a composition bias toward basic residues; sequence KKGKGKTKLRK. The residue at position 230 (Lys-230) is an N6-acetyllysine. The segment covering 236-247 has biased composition (basic and acidic residues); it reads AENKDKPNRGEK. The SHP-box signature appears at 253–261; the sequence is FTGKGYVLG. Ser-267 bears the Phosphoserine mark. Residues 280–289 show a composition bias toward polar residues; it reads SQEPLSQDHS. The segment at 280–317 is disordered; it reads SQEPLSQDHSANALRPHSKTEVKFEQNGPSKKTSVASP. Lys-302 participates in a covalent cross-link: Glycyl lysine isopeptide (Lys-Gly) (interchain with G-Cter in SUMO2). The span at 306–317 shows a compositional bias: polar residues; it reads NGPSKKTSVASP. Residues 324–331 carry the PIP-box motif; sequence QNVLSNYF. A Glycyl lysine isopeptide (Lys-Gly) (interchain with G-Cter in SUMO2); alternate cross-link involves residue Lys-340. Lys-340 is covalently cross-linked (Glycyl lysine isopeptide (Lys-Gly) (interchain with G-Cter in ubiquitin); alternate). Residues 347 to 379 form a disordered region; the sequence is GSPVKSLTVGDSTTKSVSAGSQRRVTSSRTSLR. Ser-373 is subject to Phosphoserine. The Nuclear localization signal motif lies at 401–412; the sequence is GKLPSKRPRIED. A Glycyl lysine isopeptide (Lys-Gly) (interchain with G-Cter in ubiquitin) cross-link involves residue Lys-413. Residues Lys-422 and Lys-423 each participate in a glycyl lysine isopeptide (Lys-Gly) (interchain with G-Cter in SUMO2) cross-link. Residues 427 to 455 form a disordered region; sequence QSGGGDVTSSSHPPAAAQSPSGASGQSRV. Positions 435 to 453 are enriched in low complexity; sequence SSSHPPAAAQSPSGASGQS. Residues 455 to 482 form a UBZ4-type zinc finger; the sequence is VVHCPVCQDEVSETQINEHLDWCLERDS. Cys-458, Cys-461, His-473, and Cys-477 together coordinate Zn(2+). Lys-486 is covalently cross-linked (Glycyl lysine isopeptide (Lys-Gly) (interchain with G-Cter in SUMO2)).

This sequence belongs to the Spartan family. Homodimer. Interacts (VIA PIP-box) with PCNA (when ubiquitinated). Interacts (via its SHP-box) with VCP/p97. Interacts with RAD18. Interacts with KCTD13 and POLD3. It depends on Zn(2+) as a cofactor. Post-translationally, autocatalytically cleaved in response to double-stranded DNA-binding: autocatalytic cleavage takes place in trans and leads to inactivation. In terms of processing, monoubiquitinated; monoubiquitination promotes exclusion from chromatin. Deubiquitinated by VCPIP1: deubiquitination is required for subsequent acetylation and recruitment to chromatin and DNA damage sites. Acetylated following deubiquitination by VCPIP1, leading to recruitment to chromatin and DNA damage sites. Post-translationally, phosphorylation by CHEK1 promotes recruitment to chromatin.

It is found in the nucleus. The protein localises to the chromosome. DNA-binding activates the protease activity: single-stranded DNA-binding specifically activates ability to cleave covalent DNA-protein cross-links (DPCs). In contrast, double-stranded DNA-binding specifically activates autocatalytic cleavage, and subsequent inactivation. Functionally, DNA-dependent metalloendopeptidase that mediates the proteolytic cleavage of covalent DNA-protein cross-links (DPCs) during DNA synthesis, thereby playing a key role in maintaining genomic integrity. DPCs are highly toxic DNA lesions that interfere with essential chromatin transactions, such as replication and transcription, and which are induced by reactive agents, such as UV light or formaldehyde. Associates with the DNA replication machinery and specifically removes DPCs during DNA synthesis. Catalyzes proteolytic cleavage of the HMCES DNA-protein cross-link following unfolding by the BRIP1/FANCJ helicase. Acts as a pleiotropic protease for DNA-binding proteins cross-linked with DNA, such as TOP1, TOP2A, histones H3 and H4. Mediates degradation of DPCs that are not ubiquitinated, while it is not able to degrade ubiquitinated DPCs. SPRTN activation requires polymerase collision with DPCs followed by helicase bypass of DPCs. Involved in recruitment of VCP/p97 to sites of DNA damage. Also acts as an activator of CHEK1 during normal DNA replication by mediating proteolytic cleavage of CHEK1, thereby promoting CHEK1 removal from chromatin and subsequent activation. Does not activate CHEK1 in response to DNA damage. May also act as a 'reader' of ubiquitinated PCNA: recruited to sites of UV damage and interacts with ubiquitinated PCNA and RAD18, the E3 ubiquitin ligase that monoubiquitinates PCNA. Facilitates chromatin association of RAD18 and is required for efficient PCNA monoubiquitination, promoting a feed-forward loop to enhance PCNA ubiquitination and translesion DNA synthesis. The protein is DNA-dependent metalloprotease SPRTN of Bos taurus (Bovine).